A 504-amino-acid chain; its full sequence is uncharacterized protein (504 aa).

Residues 26–46 (ILFLLLGLIILVNISINVTTV) traverse the membrane as a helical segment. The segment covering 103 to 112 (PTQCSSSSTH) has biased composition (polar residues). Disordered regions lie at residues 103-180 (PTQC…TRPM), 313-402 (YDAR…PLTT), and 431-504 (QRLA…GKLN). Residues 113-128 (YFRKHSNDRRSRRRYC) show a composition bias toward basic residues. Polar residues predominate over residues 135 to 147 (QIRQSNQQQSCHS). The span at 313–324 (YDARDQWRRGTE) shows a compositional bias: basic and acidic residues. A compositionally biased stretch (polar residues) spans 349 to 377 (SSQAHRQNFPSYTHSQPNHSPPQSVGYSS). Basic and acidic residues-rich tracts occupy residues 378-389 (RESHEVRRRAPD) and 467-478 (LELKRQVQENRG). Residues 494-504 (SLHRSRTGKLN) show a composition bias toward basic residues.

The protein resides in the membrane. This is an uncharacterized protein from Rattus norvegicus (Rat).